Reading from the N-terminus, the 258-residue chain is Acetylglutamate kinase (258 aa).

Residues 44-45 (GG), Arg66, and Asn158 each bind substrate. Residues 181-186 (DVSGIL) and 209-211 (IIT) contribute to the ATP site.

It belongs to the acetylglutamate kinase family. ArgB subfamily. Homodimer.

The protein localises to the cytoplasm. The enzyme catalyses N-acetyl-L-glutamate + ATP = N-acetyl-L-glutamyl 5-phosphate + ADP. It functions in the pathway amino-acid biosynthesis; L-arginine biosynthesis; N(2)-acetyl-L-ornithine from L-glutamate: step 2/4. In terms of biological role, catalyzes the ATP-dependent phosphorylation of N-acetyl-L-glutamate. This Salmonella paratyphi A (strain ATCC 9150 / SARB42) protein is Acetylglutamate kinase.